Consider the following 197-residue polypeptide: RNA-binding protein Rsf1 (197 aa).

One can recognise an RRM domain in the interval 7–80 (TRVYVGNLTD…SQLRVEISKG (74 aa)). Positions 74 to 197 (RVEISKGRPR…SRSPVGNHRF (124 aa)) are disordered. Positions 89–102 (GPMDRGGRRGDFGR) are enriched in basic and acidic residues. At Thr-106 the chain carries Phosphothreonine. 2 stretches are compositionally biased toward low complexity: residues 117–144 (QRGSSGSSSRHTERGYSSGRSGASSYNG) and 166–176 (RYSSGSSASYG). 5 positions are modified to phosphoserine: Ser-168, Ser-171, Ser-174, Ser-188, and Ser-190.

Belongs to the splicing factor SR family. Post-translationally, extensively phosphorylated on serine residues in the RS domain.

It is found in the nucleus. May control important aspects of development. The sequence is that of RNA-binding protein Rsf1 (Rsf1) from Drosophila melanogaster (Fruit fly).